The sequence spans 1152 residues: Fork-head transcriptional regulator FHL1 (1152 aa).

The interval 55–147 is disordered; sequence TATNNVLPES…SEDDNNNNNN (93 aa). Over residues 64 to 83 the composition is skewed to basic and acidic residues; sequence SNKKDKPIDTQDLHEDDPKA. Residues 87 to 101 are compositionally biased toward low complexity; sequence TTSNGESTSNSNSVS. Polar residues predominate over residues 126–135; that stretch reads VPVTSNSKSL. One can recognise an FHA domain in the interval 171–229; sequence VVLGRKSNDETLQQNVDVHLSSKKAISRRHAKIFYNFGTQRFEISILGRNGAFVDNVFV. Disordered stretches follow at residues 254-362 and 514-557; these read LPSN…RKNS and KKQL…PPAS. Residues 271 to 286 are compositionally biased toward polar residues; it reads KQFNPSDAINLRSNLY. A compositionally biased stretch (basic residues) spans 296–307; the sequence is PKRKPQPSKKVK. A compositionally biased stretch (low complexity) spans 328-358; that stretch reads TTAISPTASISTSTNAATAATATTPATTTAA. Coiled-coil stretches lie at residues 449–537 and 734–777; these read DDDE…SLAK and ELYI…QKSL. The fork-head DNA-binding region spans 659 to 756; the sequence is KPNISFQIMI…QREIAKAKAK (98 aa). 4 disordered regions span residues 787-833, 846-867, 951-1010, and 1057-1152; these read ASPY…GTSP, RGNGNTPATTSTTPSLPAMNDP, HEGI…VPQQ, and PAMQ…AKTE. 3 stretches are compositionally biased toward low complexity: residues 804–826, 851–863, and 973–987; these read SQSSSSSSSSATTTTNGQYGSTT, TPATTSTTPSLPA, and TTTSQSAATPTTTPQ. Pro residues-rich tracts occupy residues 996 to 1006 and 1072 to 1082; these read VKPPISTPLPQ and TSVPVPLPVPS. Polar residues-rich tracts occupy residues 1115–1128 and 1143–1152; these read SSLSRPPTFLSNKP and QATNKIAKTE.

As to quaternary structure, interacts with IFH1 and TBF1.

The protein localises to the nucleus. In terms of biological role, in complex with IFH1, acts as a transcriptional regulator of rRNA and ribosomal protein genes. The FHL1-IFH1 complex is targeted to the ribosomal protein genes by the DNA-binding factor TBF1. This is Fork-head transcriptional regulator FHL1 (FHL1) from Candida albicans (strain SC5314 / ATCC MYA-2876) (Yeast).